A 1090-amino-acid chain; its full sequence is Telomerase reverse transcriptase (1090 aa).

The disordered stretch occupies residues 184-301 (GFLLRPPSRK…PLEGGPSWRS (118 aa)). The span at 190–204 (PSRKHKSFQVGKKTR) shows a compositional bias: basic residues. Basic and acidic residues-rich tracts occupy residues 218-232 (EESR…EVST) and 252-262 (HHEERRQHEAV). The span at 281–294 (KPPPETSAAPPPLE) shows a compositional bias: pro residues. Residues 316-321 (TLGFLY) carry the TFLY; involved in RNA binding motif. Interaction with RNA template regions lie at residues 371-376 (LPLRYF) and 477-503 (WKIK…ELAY). The Reverse transcriptase domain occupies 569–893 (SPAQVASLPK…CLFPWCGLLL (325 aa)). Residues D666, D826, and D827 each coordinate Mg(2+).

Belongs to the reverse transcriptase family. Telomerase subfamily. Catalytic subunit of the telomerase holoenzyme complex composed minimally of TERT and the telomerase RNA template component (TERC). In terms of tissue distribution, expressed at highest levels in gonads and brain, and at lower levels in heart, spleen, kidney, gill, muscle and skin. Detected in embryonic stem cell lines before and after differentiation. Isoform F is expressed in gonads, with higher levels in testis relative to ovary, but is not detected in other tissues. Isoform B is expressed predominantly in testis. Isoform C is up-regulated in embryonic stem cell lines after differentiation.

The protein resides in the nucleus. Its subcellular location is the chromosome. The protein localises to the telomere. It catalyses the reaction DNA(n) + a 2'-deoxyribonucleoside 5'-triphosphate = DNA(n+1) + diphosphate. Functionally, telomerase is a ribonucleoprotein enzyme essential for the replication of chromosome termini in most eukaryotes. It elongates telomeres. It is a reverse transcriptase that adds simple sequence repeats to chromosome ends by copying a template sequence within the RNA component of the enzyme. The protein is Telomerase reverse transcriptase of Oryzias latipes (Japanese rice fish).